We begin with the raw amino-acid sequence, 373 residues long: NAD(P)H-quinone oxidoreductase subunit 1 (373 aa).

Transmembrane regions (helical) follow at residues 28–48 (LLWL…GVLV), 98–118 (LLFT…WLII), 129–149 (VGVG…GLLM), 167–187 (AAQS…IVMM), 205–225 (ILSW…ICAL), 267–287 (VLSA…PIPV), 309–329 (SVGI…AILL), and 348–368 (FLLP…LAFP).

It belongs to the complex I subunit 1 family. In terms of assembly, NDH-1 is composed of at least 11 different subunits.

The protein localises to the cellular thylakoid membrane. It catalyses the reaction a plastoquinone + NADH + (n+1) H(+)(in) = a plastoquinol + NAD(+) + n H(+)(out). It carries out the reaction a plastoquinone + NADPH + (n+1) H(+)(in) = a plastoquinol + NADP(+) + n H(+)(out). Its function is as follows. NDH-1 shuttles electrons from an unknown electron donor, via FMN and iron-sulfur (Fe-S) centers, to quinones in the respiratory and/or the photosynthetic chain. The immediate electron acceptor for the enzyme in this species is believed to be plastoquinone. Couples the redox reaction to proton translocation, and thus conserves the redox energy in a proton gradient. This Parasynechococcus marenigrum (strain WH8102) protein is NAD(P)H-quinone oxidoreductase subunit 1.